We begin with the raw amino-acid sequence, 380 residues long: Lipid-A-disaccharide synthase (380 aa).

The protein belongs to the LpxB family.

It catalyses the reaction a lipid X + a UDP-2-N,3-O-bis[(3R)-3-hydroxyacyl]-alpha-D-glucosamine = a lipid A disaccharide + UDP + H(+). Its pathway is bacterial outer membrane biogenesis; LPS lipid A biosynthesis. Its function is as follows. Condensation of UDP-2,3-diacylglucosamine and 2,3-diacylglucosamine-1-phosphate to form lipid A disaccharide, a precursor of lipid A, a phosphorylated glycolipid that anchors the lipopolysaccharide to the outer membrane of the cell. This Azotobacter vinelandii (strain DJ / ATCC BAA-1303) protein is Lipid-A-disaccharide synthase.